Consider the following 250-residue polypeptide: PF03932 family protein CutC (250 aa).

Belongs to the CutC family.

The protein localises to the cytoplasm. The protein is PF03932 family protein CutC of Vibrio vulnificus (strain YJ016).